The following is a 129-amino-acid chain: MARRTNTRKRRVRKNIDTGIAHIRSTFNNTIVTITDVHGNAIAWASAGSLGFKGSRKSTPFAAQMAAEAAAKASMEHGMKTVEVNVKGPGAGREAAIRALQAAGLEITAIKDVTPIPHNGCRPPKRRRV.

The protein belongs to the universal ribosomal protein uS11 family. As to quaternary structure, part of the 30S ribosomal subunit. Interacts with proteins S7 and S18. Binds to IF-3.

Its function is as follows. Located on the platform of the 30S subunit, it bridges several disparate RNA helices of the 16S rRNA. Forms part of the Shine-Dalgarno cleft in the 70S ribosome. The sequence is that of Small ribosomal subunit protein uS11 from Geobacillus kaustophilus (strain HTA426).